Reading from the N-terminus, the 193-residue chain is SCO1 protein homolog (193 aa).

An N-terminal signal peptide occupies residues 1–18 (MKVIKGLTAGLIFLFLCA). A lipid anchor (N-palmitoyl cysteine) is attached at Cys-19. Cys-19 carries S-diacylglycerol cysteine lipidation. A Thioredoxin domain is found at 26 to 191 (DPLNYEVEPF…IISDVKSAST (166 aa)). Residues Cys-64, Cys-68, and His-154 each coordinate Cu cation.

The protein belongs to the SCO1/2 family. In terms of assembly, monomer.

It localises to the cell membrane. Functionally, necessary for insertion of copper into the active site of cytochrome c oxidase. May play a role in copper homeostasis or redox signaling. The polypeptide is SCO1 protein homolog (ypmQ) (Bacillus subtilis (strain 168)).